The primary structure comprises 620 residues: LEAF RUST 10 DISEASE-RESISTANCE LOCUS RECEPTOR-LIKE PROTEIN KINASE-like 2.3 (620 aa).

An N-terminal signal peptide occupies residues 1 to 30 (MDSLSSMGFQTASFFLILLFLFYHLPCVPS). At 31-256 (QQERSRLCKP…NNGTYSDNRP (226 aa)) the chain is on the extracellular side. Residues N75, N85, N93, N132, N148, N162, N189, N231, and N248 are each glycosylated (N-linked (GlcNAc...) asparagine). A helical transmembrane segment spans residues 257–277 (FLVTIGTVLGSILCVCVVLFL). Topologically, residues 278–620 (AFYLNERRIA…SVESSIYSEV (343 aa)) are cytoplasmic. In terms of domain architecture, Protein kinase spans 314 to 596 (KSFTEVVGRG…SLDPPPKPLL (283 aa)). ATP contacts are provided by residues 320–328 (VGRGGFGTV) and K342. D431 (proton acceptor) is an active-site residue. Residues 586–620 (DSLDPPPKPLLHMPMQNNNAESSQLSVESSIYSEV) form a disordered region. Over residues 600–620 (MQNNNAESSQLSVESSIYSEV) the composition is skewed to polar residues.

The protein belongs to the protein kinase superfamily. Ser/Thr protein kinase family.

The protein resides in the membrane. The enzyme catalyses L-seryl-[protein] + ATP = O-phospho-L-seryl-[protein] + ADP + H(+). It carries out the reaction L-threonyl-[protein] + ATP = O-phospho-L-threonyl-[protein] + ADP + H(+). This Arabidopsis thaliana (Mouse-ear cress) protein is LEAF RUST 10 DISEASE-RESISTANCE LOCUS RECEPTOR-LIKE PROTEIN KINASE-like 2.3.